Reading from the N-terminus, the 185-residue chain is GTP cyclohydrolase 1 (185 aa).

Positions 75, 78, and 146 each coordinate Zn(2+).

It belongs to the GTP cyclohydrolase I family. As to quaternary structure, toroid-shaped homodecamer, composed of two pentamers of five dimers.

The enzyme catalyses GTP + H2O = 7,8-dihydroneopterin 3'-triphosphate + formate + H(+). It functions in the pathway cofactor biosynthesis; 7,8-dihydroneopterin triphosphate biosynthesis; 7,8-dihydroneopterin triphosphate from GTP: step 1/1. The polypeptide is GTP cyclohydrolase 1 (Methylococcus capsulatus (strain ATCC 33009 / NCIMB 11132 / Bath)).